The primary structure comprises 130 residues: S-adenosylmethionine decarboxylase proenzyme (130 aa).

The Schiff-base intermediate with substrate; via pyruvic acid role is filled by Ser66. Ser66 is subject to Pyruvic acid (Ser); by autocatalysis. Residue His71 is the Proton acceptor; for processing activity of the active site. Cys86 acts as the Proton donor; for catalytic activity in catalysis.

This sequence belongs to the prokaryotic AdoMetDC family. Type 1 subfamily. Heterotetramer of two alpha and two beta chains arranged as a dimer of alpha/beta heterodimers. The cofactor is pyruvate. In terms of processing, is synthesized initially as an inactive proenzyme. Formation of the active enzyme involves a self-maturation process in which the active site pyruvoyl group is generated from an internal serine residue via an autocatalytic post-translational modification. Two non-identical subunits are generated from the proenzyme in this reaction, and the pyruvate is formed at the N-terminus of the alpha chain, which is derived from the carboxyl end of the proenzyme. The post-translation cleavage follows an unusual pathway, termed non-hydrolytic serinolysis, in which the side chain hydroxyl group of the serine supplies its oxygen atom to form the C-terminus of the beta chain, while the remainder of the serine residue undergoes an oxidative deamination to produce ammonia and the pyruvoyl group blocking the N-terminus of the alpha chain.

The enzyme catalyses S-adenosyl-L-methionine + H(+) = S-adenosyl 3-(methylsulfanyl)propylamine + CO2. It functions in the pathway amine and polyamine biosynthesis; S-adenosylmethioninamine biosynthesis; S-adenosylmethioninamine from S-adenosyl-L-methionine: step 1/1. Functionally, catalyzes the decarboxylation of S-adenosylmethionine to S-adenosylmethioninamine (dcAdoMet), the propylamine donor required for the synthesis of the polyamines spermine and spermidine from the diamine putrescine. The chain is S-adenosylmethionine decarboxylase proenzyme from Bacillus cytotoxicus (strain DSM 22905 / CIP 110041 / 391-98 / NVH 391-98).